Consider the following 178-residue polypeptide: MAKGVVFNGLGRVRKFFGKNPEIIDIPDLIEVQKASYDHFLMMNIAPDERPNEGLQAAFKSVFPITAFSGAAMLEFVSYEFDPPKFDVDDCLWRDLTYAVPLKITLRLIVFDVDEFTGAKSIKDIKEQSIYMGDLPLMTKDGTFVIKGTQRIVVSQLHRSPGIHFDHDKGRASLSGKL.

It belongs to the RNA polymerase beta chain family. As to quaternary structure, the RNAP catalytic core consists of 2 alpha, 1 beta, 1 beta' and 1 omega subunit. When a sigma factor is associated with the core the holoenzyme is formed, which can initiate transcription.

The enzyme catalyses RNA(n) + a ribonucleoside 5'-triphosphate = RNA(n+1) + diphosphate. DNA-dependent RNA polymerase catalyzes the transcription of DNA into RNA using the four ribonucleoside triphosphates as substrates. This Liberibacter asiaticus (Citrus greening disease) protein is DNA-directed RNA polymerase subunit beta (rpoB).